The sequence spans 341 residues: 3-keto-steroid reductase/17-beta-hydroxysteroid dehydrogenase 7 (341 aa).

Over 1–229 (MRKVVLITGA…VACPGTALTN (229 aa)) the chain is Extracellular. Residue 8 to 15 (TGASSGIG) participates in NAD(+) binding. Asn37 carries an N-linked (GlcNAc...) asparagine glycan. Ser171 lines the substrate pocket. Asn178 carries N-linked (GlcNAc...) asparagine glycosylation. Catalysis depends on Tyr193, which acts as the Proton acceptor. Asn229 is a glycosylation site (N-linked (GlcNAc...) asparagine). A helical transmembrane segment spans residues 230-250 (LTYGILPPFIWTLLMPAILLL). At 251–341 (RFFANAFTLT…NQARLSGSCL (91 aa)) the chain is on the cytoplasmic side.

Belongs to the short-chain dehydrogenases/reductases (SDR) family. ERG27 subfamily. Binds to the short form of prolactin receptor. Phosphorylated. In terms of tissue distribution, highly expressed in adrenal gland, liver, lung and thymus. Expressed in breast, ovaries, pituitary gland, pregnant uterus, prostate, kidney, lymph node, small intestine, spinal cord and trachea. Weakly expressed in all other tissues tested. As to expression, expressed in eye ciliary epithelial cells and neuroendocrine cells.

The protein resides in the endoplasmic reticulum membrane. The catalysed reaction is 17beta-estradiol + NADP(+) = estrone + NADPH + H(+). The enzyme catalyses a 3beta-hydroxysteroid + NADP(+) = a 3-oxosteroid + NADPH + H(+). It catalyses the reaction 3-dehydro-4alpha-methylzymosterol + NADPH + H(+) = 4alpha-methylzymosterol + NADP(+). It carries out the reaction zymosterone + NADPH + H(+) = zymosterol + NADP(+). The catalysed reaction is 4alpha-methyl-5alpha-cholest-8-en-3-one + NADPH + H(+) = 4alpha-methyl-5alpha-cholest-8-en-3beta-ol + NADP(+). The enzyme catalyses 4alpha-methyl-5alpha-cholest-7-en-3beta-ol + NADP(+) = 4alpha-methyl-5alpha-cholest-7-en-3-one + NADPH + H(+). It catalyses the reaction 5alpha-cholest-8-en-3-one + NADPH + H(+) = 5alpha-cholest-8-en-3beta-ol + NADP(+). It carries out the reaction 5alpha-androstane-3beta,17beta-diol + NADP(+) = 17beta-hydroxy-5alpha-androstan-3-one + NADPH + H(+). The catalysed reaction is progesterone + NADPH + H(+) = 3beta-hydroxypregn-4-ene-20-one + NADP(+). It functions in the pathway steroid biosynthesis; estrogen biosynthesis. Its pathway is steroid biosynthesis; zymosterol biosynthesis; zymosterol from lanosterol: step 5/6. Its activity is regulated as follows. Estradiol 17-beta-dehydrogenase and dihydrotestosterone oxidoreductase activities are selectively inhibited by 4-methyl-4-aza-5alpha-androstane derivatives, such as 17beta-[(N-Heptyl)methylamino]-4-aza-5r-androstan-3-one and 17beta-(N-Decylformamido)-4-aza-5r-androstan-3-one. Its function is as follows. Bifunctional enzyme involved in steroid-hormone metabolism and cholesterol biosynthesis. Catalyzes the NADP(H)-dependent reduction of estrogens and androgens and regulates the biological potency of these steroids. Converts estrone (E1) to a more potent estrogen, 17beta-estradiol (E2). Converts dihydrotestosterone (DHT) to its inactive form 5a-androstane-3b,17b-diol. Converts moderately progesterone to 3beta-hydroxypregn-4-ene-20-one, leading to its inactivation. Additionally, participates in the post-squalene cholesterol biosynthesis, as a 3-ketosteroid reductase. In terms of biological role, does not have enzymatic activities toward E1 and DHT. The sequence is that of 3-keto-steroid reductase/17-beta-hydroxysteroid dehydrogenase 7 (HSD17B7) from Homo sapiens (Human).